Consider the following 65-residue polypeptide: NADH dehydrogenase [ubiquinone] 1 alpha subcomplex subunit 1 (65 aa).

The helical transmembrane segment at 3–23 (LVWLEAMLPLGIIGGMLCIMG) threads the bilayer.

Belongs to the complex I NDUFA1 subunit family. As to quaternary structure, complex I is composed of at least 49 different subunits.

The protein localises to the mitochondrion inner membrane. Accessory subunit of the mitochondrial membrane respiratory chain NADH dehydrogenase (Complex I), that is believed not to be involved in catalysis. Complex I functions in the transfer of electrons from NADH to the respiratory chain. The immediate electron acceptor for the enzyme is believed to be ubiquinone. In Arabidopsis thaliana (Mouse-ear cress), this protein is NADH dehydrogenase [ubiquinone] 1 alpha subcomplex subunit 1.